Reading from the N-terminus, the 147-residue chain is Large ribosomal subunit protein bL9 (147 aa).

It belongs to the bacterial ribosomal protein bL9 family.

Its function is as follows. Binds to the 23S rRNA. This is Large ribosomal subunit protein bL9 from Clostridium botulinum (strain 657 / Type Ba4).